Reading from the N-terminus, the 372-residue chain is Queuine tRNA-ribosyltransferase (372 aa).

The active-site Proton acceptor is Asp89. Residues 89–93 (DSGGF), Asp161, and Gly232 each bind substrate. The interval 262-268 (GIGDLPS) is RNA binding. The Nucleophile role is filled by Asp281. Residues 286–290 (TKAAR) are RNA binding; important for wobble base 34 recognition. 4 residues coordinate Zn(2+): Cys319, Cys321, Cys324, and His351.

It belongs to the queuine tRNA-ribosyltransferase family. In terms of assembly, homodimer. Within each dimer, one monomer is responsible for RNA recognition and catalysis, while the other monomer binds to the replacement base PreQ1. Zn(2+) is required as a cofactor.

The catalysed reaction is 7-aminomethyl-7-carbaguanine + guanosine(34) in tRNA = 7-aminomethyl-7-carbaguanosine(34) in tRNA + guanine. The protein operates within tRNA modification; tRNA-queuosine biosynthesis. In terms of biological role, catalyzes the base-exchange of a guanine (G) residue with the queuine precursor 7-aminomethyl-7-deazaguanine (PreQ1) at position 34 (anticodon wobble position) in tRNAs with GU(N) anticodons (tRNA-Asp, -Asn, -His and -Tyr). Catalysis occurs through a double-displacement mechanism. The nucleophile active site attacks the C1' of nucleotide 34 to detach the guanine base from the RNA, forming a covalent enzyme-RNA intermediate. The proton acceptor active site deprotonates the incoming PreQ1, allowing a nucleophilic attack on the C1' of the ribose to form the product. After dissociation, two additional enzymatic reactions on the tRNA convert PreQ1 to queuine (Q), resulting in the hypermodified nucleoside queuosine (7-(((4,5-cis-dihydroxy-2-cyclopenten-1-yl)amino)methyl)-7-deazaguanosine). The chain is Queuine tRNA-ribosyltransferase from Chlamydia felis (strain Fe/C-56) (Chlamydophila felis).